Consider the following 94-residue polypeptide: Neutrophil antibiotic peptide NP-2 (94 aa).

Positions 1 to 19 (MRTLTLLTALLLLALHTQA) are cleaved as a signal peptide. A propeptide spanning residues 20–62 (KSPQGTAEEAPDQEQLVMEDQDISISFGGDKGTALQDADVKAG) is cleaved from the precursor. 3 disulfide bridges follow: cysteine 65–cysteine 93, cysteine 67–cysteine 82, and cysteine 72–cysteine 92.

Belongs to the alpha-defensin family. As to expression, highest expression in bone marrow and to a much lesser extent in small intestine.

The protein localises to the secreted. Functionally, active in vitro against S.aureus, fungi, Gram-positive and Gram-negative bacteria and to a lesser extent against an enveloped virus. The chain is Neutrophil antibiotic peptide NP-2 (Defa) from Rattus norvegicus (Rat).